An 880-amino-acid chain; its full sequence is DNA polymerase I (880 aa).

The 95-residue stretch at 174 to 268 (TPEQIIDMKG…SGLEYQGFNR (95 aa)) folds into the 5'-3' exonuclease domain. Positions 302–470 (DINVKTVTDV…LREKLVQELE (169 aa)) constitute a 3'-5' exonuclease domain.

This sequence belongs to the DNA polymerase type-A family. As to quaternary structure, single-chain monomer with multiple functions.

The enzyme catalyses DNA(n) + a 2'-deoxyribonucleoside 5'-triphosphate = DNA(n+1) + diphosphate. Its function is as follows. In addition to polymerase activity, this DNA polymerase exhibits 3'-5' and 5'-3' exonuclease activity. The protein is DNA polymerase I (polA) of Bacillus subtilis (strain 168).